The sequence spans 307 residues: Ribonuclease Z (307 aa).

Zn(2+)-binding residues include H63, H65, D67, H68, H141, D212, and H270. The Proton acceptor role is filled by D67.

It belongs to the RNase Z family. Homodimer. Zn(2+) is required as a cofactor.

The catalysed reaction is Endonucleolytic cleavage of RNA, removing extra 3' nucleotides from tRNA precursor, generating 3' termini of tRNAs. A 3'-hydroxy group is left at the tRNA terminus and a 5'-phosphoryl group is left at the trailer molecule.. In terms of biological role, zinc phosphodiesterase, which displays some tRNA 3'-processing endonuclease activity. Probably involved in tRNA maturation, by removing a 3'-trailer from precursor tRNA. The polypeptide is Ribonuclease Z (Bacillus anthracis (strain A0248)).